Here is a 183-residue protein sequence, read N- to C-terminus: Holliday junction branch migration complex subunit RuvA (183 aa).

The domain I stretch occupies residues 1–63 (MTVGLIGVVE…EDAHLLYGFL (63 aa)). The domain II stretch occupies residues 64–141 (EESEKILFER…IQDETKPVHN (78 aa)). A region of interest (flexible linker) is located at residue N141. Positions 141–183 (NEAFLALESLGFKSAEINPILKKLKPNLSVEEAIKEALQQLRS) are domain III.

The protein belongs to the RuvA family. In terms of assembly, homotetramer. Forms an RuvA(8)-RuvB(12)-Holliday junction (HJ) complex. HJ DNA is sandwiched between 2 RuvA tetramers; dsDNA enters through RuvA and exits via RuvB. An RuvB hexamer assembles on each DNA strand where it exits the tetramer. Each RuvB hexamer is contacted by two RuvA subunits (via domain III) on 2 adjacent RuvB subunits; this complex drives branch migration. In the full resolvosome a probable DNA-RuvA(4)-RuvB(12)-RuvC(2) complex forms which resolves the HJ.

The protein resides in the cytoplasm. Functionally, the RuvA-RuvB-RuvC complex processes Holliday junction (HJ) DNA during genetic recombination and DNA repair, while the RuvA-RuvB complex plays an important role in the rescue of blocked DNA replication forks via replication fork reversal (RFR). RuvA specifically binds to HJ cruciform DNA, conferring on it an open structure. The RuvB hexamer acts as an ATP-dependent pump, pulling dsDNA into and through the RuvAB complex. HJ branch migration allows RuvC to scan DNA until it finds its consensus sequence, where it cleaves and resolves the cruciform DNA. In Helicobacter acinonychis (strain Sheeba), this protein is Holliday junction branch migration complex subunit RuvA.